Reading from the N-terminus, the 1845-residue chain is Histone-lysine N-methyltransferase, H3 lysine-79 specific (1845 aa).

Positions 1–44 (MSTNSTPRKQKLSNSKSLQNSPISPTVKKTNSFPLGNNIPTNIN) are enriched in polar residues. Disordered regions lie at residues 1-67 (MSTN…NGIG), 83-306 (PPLP…NKWT), 450-470 (SHDI…NKNK), 486-571 (QKLK…TERK), 585-681 (RKER…NDSY), 741-767 (GETF…KKIE), 862-881 (QTTK…AETE), and 963-1102 (KDNP…SNSL). Composition is skewed to low complexity over residues 52 to 67 (NNSN…NGIG), 90 to 162 (SSSS…QQEP), 191 to 226 (PSTP…SNNS), and 239 to 263 (NNNN…NNNN). Residues 268-280 (VIDDDDDDDDDEG) are compositionally biased toward acidic residues. Residues 282 to 294 (SIKSTHTSTQSTP) show a composition bias toward polar residues. Residues 295 to 304 (IRDRRQRDNK) show a composition bias toward basic and acidic residues. The span at 453 to 464 (INNNNNNNNNNK) shows a compositional bias: low complexity. The span at 585-679 (RKERERKERK…IEKERREKND (95 aa)) shows a compositional bias: basic and acidic residues. Residues 625–639 (KKKEKEKEKEKEKEK) form a required for interaction with nucleosomes and DNA region. 4 stretches are compositionally biased toward low complexity: residues 750 to 763 (NNNN…NNNN), 862 to 877 (QTTK…TTTT), 972 to 1011 (NNNR…RNNN), and 1020 to 1067 (NNNN…NNTI). A compositionally biased stretch (basic and acidic residues) spans 1069 to 1080 (KKIETIKKDINK). Positions 1084-1102 (KTTTTTSSSSSSTSSSNSL) are enriched in low complexity. Positions 1125 to 1446 (FDVGIGVPVT…KDSDIVTDQT (322 aa)) constitute a DOT1 domain. S-adenosyl-L-methionine is bound by residues 1251 to 1254 (YGEA), 1274 to 1283 (FCDIGCGIGN), and glutamate 1300. Disordered regions lie at residues 1463–1559 (LQLF…NKPI), 1610–1661 (RISP…SSND), 1735–1762 (HQKS…KKEQ), 1772–1791 (NYNN…NHNN), and 1799–1845 (TDLI…DNNK). Composition is skewed to low complexity over residues 1467 to 1522 (SSSS…TPNS), 1541 to 1556 (NNNN…NSNN), and 1610 to 1642 (RISP…SSSD). The segment covering 1643–1656 (NENDDDNGDDEDDS) has biased composition (acidic residues). Over residues 1745–1759 (RLSRKQKKLAKKNKK) the composition is skewed to basic residues. Low complexity-rich tracts occupy residues 1799-1817 (TDLI…INND) and 1835-1845 (KDYNNINDNNK).

The protein belongs to the class I-like SAM-binding methyltransferase superfamily. DOT1 family.

Its subcellular location is the nucleus. It carries out the reaction L-lysyl(79)-[histone H3] + 3 S-adenosyl-L-methionine = N(6),N(6),N(6)-trimethyl-L-lysyl(79)-[histone H3] + 3 S-adenosyl-L-homocysteine + 3 H(+). Its function is as follows. Histone methyltransferase that specifically methylates histone H3 to form H3K79me. This methylation is required for telomere silencing, correct growth and development, and for resistance to DNA damage induced by UV LIGHT. In Dictyostelium discoideum (Social amoeba), this protein is Histone-lysine N-methyltransferase, H3 lysine-79 specific.